The chain runs to 464 residues: MSLHFLYYCSEPTLDVKIAFCQGFDKHVDVSSIAKHYNMSKSKVDNQFYSVEVGDSTFTVLKRYQNLKPIGSGAQGIVCAAYDAVLDRNVAIKKLSRPFQNQTHAKRAYRELVLMKCVNHKNIISLLNVFTPQKTLEEFQDVYLVMELMDANLCQVIQMELDHERMSYLLYQMLCGIKHLHSAGIIHRDLKPSNIVVKSDCTLKILDFGLARTAGTSFMMTPYVVTRYYRAPEVILGMGYKENVDIWSVGCIMGEMVRHKILFPGRSYIDQWNKVIEQLGTPCPEFMKKLQPTVRNYVENRPKYAGLTFPKLFPDSLFPADSEHNKLKASQARDLLSKMLVIDPVKRISVDDALQHPYINVWYDPAEVEAPPPQIYDKQLDEREHTIEEWKELIYKEVMNSEEKTKNGVVKSQPSPSGAAVNSSESLPPSSAVNDISSMSTDQTLASDTDSSLEASAGPLGCCR.

The Protein kinase domain maps to 64–359 (YQNLKPIGSG…VDDALQHPYI (296 aa)). ATP-binding positions include 70 to 78 (IGSGAQGIV) and lysine 93. Aspartate 189 functions as the Proton acceptor in the catalytic mechanism. Threonine 221 is subject to Phosphothreonine; by MAP2K7. The short motif at 221–223 (TPY) is the TXY element. A Phosphotyrosine; by MAP2K4 modification is found at tyrosine 223. Residues 405 to 464 (TKNGVVKSQPSPSGAAVNSSESLPPSSAVNDISSMSTDQTLASDTDSSLEASAGPLGCCR) are disordered. Positions 410 to 454 (VKSQPSPSGAAVNSSESLPPSSAVNDISSMSTDQTLASDTDSSLE) are enriched in polar residues. S-palmitoyl cysteine attachment occurs at residues cysteine 462 and cysteine 463.

Belongs to the protein kinase superfamily. CMGC Ser/Thr protein kinase family. MAP kinase subfamily. As to quaternary structure, interacts with MAPK8IP1/JIP-1, MAPK8IP3/JIP-3/JSAP1 and SPAG9/MAPK8IP4/JIP4. Interacts with HDAC9 and MAPKBP1. Interacts with ARRB2; the interaction enhances MAPK10 activation by MAP3K5. Interacts with SARM1. Interacts with JUND; interaction is inhibited in the presence of MEN1. Requires Mg(2+) as cofactor. In terms of processing, dually phosphorylated on Thr-221 and Tyr-223 by MAP2K4 and MAP2K7, which activates the enzyme. MAP2K7 shows a strong preference for Thr-221 while MAP2K4 phosphorylates Tyr-223 preferentially. Weakly autophosphorylated on threonine and tyrosine residues in vitro. Palmitoylation regulates subcellular location and axonal development. Brain (at protein level). Expressed specifically in neurons of the hippocampus, cortex, cerebellum, brainstem, and spinal cord. Seems to be also found in testis, and very weakly in the heart.

The protein resides in the cytoplasm. Its subcellular location is the membrane. It localises to the nucleus. The protein localises to the mitochondrion. It catalyses the reaction L-seryl-[protein] + ATP = O-phospho-L-seryl-[protein] + ADP + H(+). It carries out the reaction L-threonyl-[protein] + ATP = O-phospho-L-threonyl-[protein] + ADP + H(+). Its activity is regulated as follows. Activated by threonine and tyrosine phosphorylation by two dual specificity kinases, MAP2K4 and MAP2K7. MAP2K7 phosphorylates MAPK10 on Thr-221 causing a conformational change and a large increase in Vmax for the enzyme. MAP2K4 then phosphorylates Tyr-223 resulting in a further increase in Vmax. Inhibited by dual specificity phosphatases, such as DUSP1. Inhibited by HDAC9. Its function is as follows. Serine/threonine-protein kinase involved in various processes such as neuronal proliferation, differentiation, migration and programmed cell death. Extracellular stimuli such as pro-inflammatory cytokines or physical stress stimulate the stress-activated protein kinase/c-Jun N-terminal kinase (SAP/JNK) signaling pathway. In this cascade, two dual specificity kinases MAP2K4/MKK4 and MAP2K7/MKK7 phosphorylate and activate MAPK10/JNK3. In turn, MAPK10/JNK3 phosphorylates a number of transcription factors, primarily components of AP-1 such as JUN and ATF2 and thus regulates AP-1 transcriptional activity. Plays regulatory roles in the signaling pathways during neuronal apoptosis. Phosphorylates the neuronal microtubule regulator STMN2. Acts in the regulation of the amyloid-beta precursor protein/APP signaling during neuronal differentiation by phosphorylating APP. Also participates in neurite growth in spiral ganglion neurons. Phosphorylates the CLOCK-BMAL1 heterodimer and plays a role in the photic regulation of the circadian clock. Phosphorylates JUND and this phosphorylation is inhibited in the presence of MEN1. The chain is Mitogen-activated protein kinase 10 (Mapk10) from Mus musculus (Mouse).